The sequence spans 295 residues: GTPase Era (295 aa).

Positions 4 to 171 (KSGFVTIIGR…IKQIVSFLPE (168 aa)) constitute an Era-type G domain. Residues 12 to 19 (GRPNVGKS) are G1. 12 to 19 (GRPNVGKS) contacts GTP. The G2 stretch occupies residues 38–42 (QTTRN). Positions 59–62 (DTPG) are G3. Residues 59 to 63 (DTPGI) and 121 to 124 (NKID) each bind GTP. Residues 121-124 (NKID) are G4. Residues 150-152 (ISA) form a G5 region. The KH type-2 domain occupies 202–280 (LDQEIPHGIA…FLELWVKVNE (79 aa)).

The protein belongs to the TRAFAC class TrmE-Era-EngA-EngB-Septin-like GTPase superfamily. Era GTPase family. As to quaternary structure, monomer.

It is found in the cytoplasm. The protein resides in the cell membrane. Functionally, an essential GTPase that binds both GDP and GTP, with rapid nucleotide exchange. Plays a role in 16S rRNA processing and 30S ribosomal subunit biogenesis and possibly also in cell cycle regulation and energy metabolism. The chain is GTPase Era from Alkaliphilus metalliredigens (strain QYMF).